A 467-amino-acid chain; its full sequence is 3-isopropylmalate dehydratase large subunit (467 aa).

Residues Cys-348, Cys-409, and Cys-412 each contribute to the [4Fe-4S] cluster site.

The protein belongs to the aconitase/IPM isomerase family. LeuC type 1 subfamily. As to quaternary structure, heterodimer of LeuC and LeuD. The cofactor is [4Fe-4S] cluster.

The catalysed reaction is (2R,3S)-3-isopropylmalate = (2S)-2-isopropylmalate. It functions in the pathway amino-acid biosynthesis; L-leucine biosynthesis; L-leucine from 3-methyl-2-oxobutanoate: step 2/4. In terms of biological role, catalyzes the isomerization between 2-isopropylmalate and 3-isopropylmalate, via the formation of 2-isopropylmaleate. The sequence is that of 3-isopropylmalate dehydratase large subunit from Magnetococcus marinus (strain ATCC BAA-1437 / JCM 17883 / MC-1).